A 157-amino-acid chain; its full sequence is Endoribonuclease YbeY (157 aa).

Positions 122, 126, and 132 each coordinate Zn(2+).

It belongs to the endoribonuclease YbeY family. Zn(2+) serves as cofactor.

The protein localises to the cytoplasm. Single strand-specific metallo-endoribonuclease involved in late-stage 70S ribosome quality control and in maturation of the 3' terminus of the 16S rRNA. This chain is Endoribonuclease YbeY, found in Lysinibacillus sphaericus (strain C3-41).